A 309-amino-acid polypeptide reads, in one-letter code: HPr kinase/phosphorylase (309 aa).

Catalysis depends on residues H138 and K159. 153-160 contributes to the ATP binding site; sequence GKSGVGKS. A Mg(2+)-binding site is contributed by S160. The active-site Proton acceptor; for phosphorylation activity. Proton donor; for dephosphorylation activity is the D177. Residues 201–210 are important for the catalytic mechanism of both phosphorylation and dephosphorylation; the sequence is LEIRGLGIIN. E202 is a Mg(2+) binding site. The active site involves R243. Residues 264 to 269 form an important for the catalytic mechanism of dephosphorylation region; it reads PVRPGR.

It belongs to the HPrK/P family. As to quaternary structure, homohexamer. Mg(2+) is required as a cofactor.

The catalysed reaction is [HPr protein]-L-serine + ATP = [HPr protein]-O-phospho-L-serine + ADP + H(+). It carries out the reaction [HPr protein]-O-phospho-L-serine + phosphate + H(+) = [HPr protein]-L-serine + diphosphate. In terms of biological role, catalyzes the ATP- as well as the pyrophosphate-dependent phosphorylation of a specific serine residue in HPr, a phosphocarrier protein of the phosphoenolpyruvate-dependent sugar phosphotransferase system (PTS). HprK/P also catalyzes the pyrophosphate-producing, inorganic phosphate-dependent dephosphorylation (phosphorolysis) of seryl-phosphorylated HPr (P-Ser-HPr). The two antagonistic activities of HprK/P are regulated by several intracellular metabolites, which change their concentration in response to the absence or presence of rapidly metabolisable carbon sources (glucose, fructose, etc.) in the growth medium. Also phosphorylates/dephosphorylates the HPr-like catabolite repression protein crh on a specific serine residue. Therefore, by controlling the phosphorylation state of HPr and crh, HPrK/P is a sensor enzyme that plays a major role in the regulation of carbon metabolism and sugar transport: it mediates carbon catabolite repression (CCR), and regulates PTS-catalyzed carbohydrate uptake and inducer exclusion. This chain is HPr kinase/phosphorylase, found in Geobacillus thermodenitrificans (strain NG80-2).